A 362-amino-acid chain; its full sequence is Putative F-box/kelch-repeat protein At3g20710 (362 aa).

Residues M1–A50 form the F-box domain. Kelch repeat units lie at residues Y150 to N201 and I293 to S341.

In Arabidopsis thaliana (Mouse-ear cress), this protein is Putative F-box/kelch-repeat protein At3g20710.